We begin with the raw amino-acid sequence, 305 residues long: Phosphoribosylaminoimidazole-succinocarboxamide synthase (305 aa).

The protein belongs to the SAICAR synthetase family.

The enzyme catalyses 5-amino-1-(5-phospho-D-ribosyl)imidazole-4-carboxylate + L-aspartate + ATP = (2S)-2-[5-amino-1-(5-phospho-beta-D-ribosyl)imidazole-4-carboxamido]succinate + ADP + phosphate + 2 H(+). It participates in purine metabolism; IMP biosynthesis via de novo pathway; 5-amino-1-(5-phospho-D-ribosyl)imidazole-4-carboxamide from 5-amino-1-(5-phospho-D-ribosyl)imidazole-4-carboxylate: step 1/2. In Tropheryma whipplei (strain Twist) (Whipple's bacillus), this protein is Phosphoribosylaminoimidazole-succinocarboxamide synthase.